We begin with the raw amino-acid sequence, 123 residues long: Histone H2B (123 aa).

The tract at residues 1–30 (MPPKTSGKAAKKAGKAQKNITKTDKKKKRR) is disordered. Residue proline 2 is modified to N-methylproline; partial. Residue lysine 44 is modified to N6-succinyllysine. Residue serine 110 is glycosylated (O-linked (GlcNAc) serine). An N6-succinyllysine mark is found at lysine 114 and lysine 118. Residue lysine 118 forms a Glycyl lysine isopeptide (Lys-Gly) (interchain with G-Cter in ubiquitin) linkage.

The protein belongs to the histone H2B family. As to quaternary structure, the nucleosome is a histone octamer containing two molecules each of H2A, H2B, H3 and H4 assembled in one H3-H4 heterotetramer and two H2A-H2B heterodimers. The octamer wraps approximately 147 bp of DNA. Phosphorylated by the catalytic component of the Dbf4-dependent kinase (DDK) complex Cdc7. In terms of processing, monoubiquitination of Lys-118 by Bre1 gives a specific tag for epigenetic transcriptional activation and is also prerequisite for histone H3 'Lys-4' and 'Lys-79' methylation. Deubiquitination of Lys-118 by the SAGA complex is involved in activating transcription of a large subset of genes. Post-translationally, methylation at Pro-2 increases upon heat shock. GlcNAcylation at Ser-110 promotes monoubiquitination of Lys-118. It fluctuates in response to extracellular glucose, and associates with transcribed genes.

It is found in the nucleus. The protein localises to the chromosome. Functionally, core component of nucleosome. Nucleosomes wrap and compact DNA into chromatin, limiting DNA accessibility to the cellular machineries which require DNA as a template. Histones thereby play a central role in transcription regulation, DNA repair, DNA replication and chromosomal stability. DNA accessibility is regulated via a complex set of post-translational modifications of histones, also called histone code, and nucleosome remodeling. This chain is Histone H2B (His2B), found in Drosophila yakuba (Fruit fly).